The chain runs to 689 residues: Methionine--tRNA ligase (689 aa).

A 'HIGH' region motif is present at residues 13 to 23 (PYANGNFHIGH). The Zn(2+) site is built by Cys-144, Cys-147, Cys-157, and Cys-160. The 'KMSKS' region signature appears at 341–345 (KMSKS). Lys-344 is an ATP binding site. Residues 583-689 (DFAKVDLRIA…PGASPGLRVR (107 aa)) form the tRNA-binding domain.

It belongs to the class-I aminoacyl-tRNA synthetase family. MetG type 1 subfamily. In terms of assembly, homodimer. Requires Zn(2+) as cofactor.

Its subcellular location is the cytoplasm. The catalysed reaction is tRNA(Met) + L-methionine + ATP = L-methionyl-tRNA(Met) + AMP + diphosphate. Is required not only for elongation of protein synthesis but also for the initiation of all mRNA translation through initiator tRNA(fMet) aminoacylation. This Polaromonas sp. (strain JS666 / ATCC BAA-500) protein is Methionine--tRNA ligase.